A 261-amino-acid polypeptide reads, in one-letter code: Small ribosomal subunit protein eS1 (261 aa).

A compositionally biased stretch (basic residues) spans 1 to 18 (MAVGKNKRISKGKKGGKK). The tract at residues 1-22 (MAVGKNKRISKGKKGGKKKAAD) is disordered.

Belongs to the eukaryotic ribosomal protein eS1 family. As to quaternary structure, component of the small ribosomal subunit. Mature ribosomes consist of a small (40S) and a large (60S) subunit. The 40S subunit contains about 33 different proteins and 1 molecule of RNA (18S). The 60S subunit contains about 49 different proteins and 3 molecules of RNA (25S, 5.8S and 5S).

Its subcellular location is the cytoplasm. This Cicer arietinum (Chickpea) protein is Small ribosomal subunit protein eS1.